A 586-amino-acid polypeptide reads, in one-letter code: NudC domain-containing protein 1 (586 aa).

Residues K259 to P278 are disordered. In terms of domain architecture, CS spans K275–V364.

It localises to the cytoplasm. Its subcellular location is the nucleus. This Xenopus tropicalis (Western clawed frog) protein is NudC domain-containing protein 1.